The primary structure comprises 270 residues: G-box-binding factor 4 (270 aa).

A disordered region spans residues 1–46 (MASFKLMSSSNSDLSRRNSSSASSSPSIRSSHHLRPNPHADHSRIS). Over residues 8-29 (SSSNSDLSRRNSSSASSSPSIR) the composition is skewed to low complexity. Ser-27 is subject to Phosphoserine. Positions 187 to 250 (AAQRQKRMIK…YKKLMEVLIP (64 aa)) constitute a bZIP domain. The basic motif stretch occupies residues 190 to 208 (RQKRMIKNRESAARSRERK). Positions 215–229 (LETLAAKLEEENEQL) are leucine-zipper. Residues 250–270 (PVDEKPRPPSRPLSRSHSLEW) form a disordered region. Low complexity predominate over residues 261–270 (PLSRSHSLEW).

The protein belongs to the bZIP family. As to quaternary structure, DNA-binding heterodimer with GBF2 and GBF3; non DNA-binding homodimer.

The protein localises to the nucleus. In terms of biological role, binds to the G-box motif (5'-CCACGTGG-3') of the rbcS-1A gene promoter. G-box and G-box-like motifs are cis-acting elements defined in promoters of certain plant genes which are regulated by such diverse stimuli as light-induction or hormone control. This chain is G-box-binding factor 4 (GBF4), found in Arabidopsis thaliana (Mouse-ear cress).